The sequence spans 249 residues: Probable phosphatase Shal_1519 (249 aa).

H8, H10, H16, H41, E74, H102, H132, D193, and H195 together coordinate Zn(2+).

Belongs to the PHP family. Zn(2+) is required as a cofactor.

The sequence is that of Probable phosphatase Shal_1519 from Shewanella halifaxensis (strain HAW-EB4).